Reading from the N-terminus, the 413-residue chain is Multifunctional CCA protein (413 aa).

ATP contacts are provided by Gly-8 and Arg-11. CTP contacts are provided by Gly-8 and Arg-11. 2 residues coordinate Mg(2+): Glu-21 and Asp-23. The ATP site is built by Arg-91, Arg-137, and Arg-140. Residues Arg-91, Arg-137, and Arg-140 each coordinate CTP. Positions 228-329 (CGIHTLMSLR…WRLLQRLDVL (102 aa)) constitute an HD domain.

This sequence belongs to the tRNA nucleotidyltransferase/poly(A) polymerase family. Bacterial CCA-adding enzyme type 1 subfamily. Monomer. Can also form homodimers and oligomers. Mg(2+) is required as a cofactor. Requires Ni(2+) as cofactor.

The catalysed reaction is a tRNA precursor + 2 CTP + ATP = a tRNA with a 3' CCA end + 3 diphosphate. It carries out the reaction a tRNA with a 3' CCA end + 2 CTP + ATP = a tRNA with a 3' CCACCA end + 3 diphosphate. In terms of biological role, catalyzes the addition and repair of the essential 3'-terminal CCA sequence in tRNAs without using a nucleic acid template. Adds these three nucleotides in the order of C, C, and A to the tRNA nucleotide-73, using CTP and ATP as substrates and producing inorganic pyrophosphate. tRNA 3'-terminal CCA addition is required both for tRNA processing and repair. Also involved in tRNA surveillance by mediating tandem CCA addition to generate a CCACCA at the 3' terminus of unstable tRNAs. While stable tRNAs receive only 3'-terminal CCA, unstable tRNAs are marked with CCACCA and rapidly degraded. This is Multifunctional CCA protein from Acinetobacter baylyi (strain ATCC 33305 / BD413 / ADP1).